The sequence spans 174 residues: Co-chaperone protein HscB (174 aa).

Residues 2 to 74 (NYFALFDLPR…LNRAIYFLCL (73 aa)) enclose the J domain.

This sequence belongs to the HscB family. Interacts with HscA and stimulates its ATPase activity. Interacts with IscU.

Functionally, co-chaperone involved in the maturation of iron-sulfur cluster-containing proteins. Seems to help targeting proteins to be folded toward HscA. This is Co-chaperone protein HscB from Buchnera aphidicola subsp. Acyrthosiphon pisum (strain 5A).